The following is a 736-amino-acid chain: MDSNVDSQRVPDGQIFFRPVHPGISGKDMESGTSDGQQRKMMEFEISEEADMRLTRQQTQNRTGFASADTKQGSPEGADRKKMPPGKAWLWFVLILIVNFLMVRLLIPDAEQPVMVPYTLFKGEVGKGNVKEIFSRGDTITGRFKEEIAYQAAEEKAGDSRKASKAVTTFTTTVPSFVDPGLEAFLISNGVEISAKPIHEERSPWATIVYSFGPGLLFIAFYIWLFRRMAQQGGLGGGIMGIGKSKARRYDQEEGRKVTFDDVAGIDEAENELVEIVDFLKDPPKYTRLGGTAPKGVLLVGAPGTGKTLLAKAVAGEAGVPFFSMSAAEFVEMIVGVGAARVRDLFKQAREHAPAIIFIDELDAIGRARGQVAIGGASEQEQTLNQILTEMDGFSSREGIIVLAATNQPDVLDKALLRPGRFDRRVVVNLPDKVGREAILKVHTRSVPLAKDASLGELAAATPGFSGADLRNLVNEAALMAARRDQDDVRARDFLDALEKIVLGPERPLLLSHADKERIAYHEGGHAILGLVAHGADRVHRVTIVPRGQALGVTYQRPDSDRYNYTEAYLRAKIVGMLGGRAAEEIVYGTRTTGAESDIEQATGLAHRMVTRWGMSERLGLIQLAPRENPYLGGPAGYGSARPFSDGTAEAIDAEVIRIIAESHEEAKRLLRAYRKQLDVLAEALVAQETLDEQEILRITGLPPAPALDAGKLPVPDGGDKNAEPSVSLPGVAGPS.

Disordered regions lie at residues 1–39 (MDSN…GQQR) and 57–83 (QQTQ…RKKM). At 1–87 (MDSNVDSQRV…ADRKKMPPGK (87 aa)) the chain is on the cytoplasmic side. Polar residues predominate over residues 57–73 (QQTQNRTGFASADTKQG). The helical transmembrane segment at 88 to 108 (AWLWFVLILIVNFLMVRLLIP) threads the bilayer. The Periplasmic segment spans residues 109-205 (DAEQPVMVPY…KPIHEERSPW (97 aa)). The chain crosses the membrane as a helical span at residues 206–226 (ATIVYSFGPGLLFIAFYIWLF). Over 227–736 (RRMAQQGGLG…VSLPGVAGPS (510 aa)) the chain is Cytoplasmic. 301-308 (GAPGTGKT) contacts ATP. Zn(2+) is bound at residue H522. E523 is a catalytic residue. Zn(2+) contacts are provided by H526 and D598. The segment at 706–736 (PALDAGKLPVPDGGDKNAEPSVSLPGVAGPS) is disordered.

In the central section; belongs to the AAA ATPase family. This sequence in the C-terminal section; belongs to the peptidase M41 family. Homohexamer. Zn(2+) is required as a cofactor.

The protein localises to the cell inner membrane. Its function is as follows. Acts as a processive, ATP-dependent zinc metallopeptidase for both cytoplasmic and membrane proteins. Plays a role in the quality control of integral membrane proteins. This is ATP-dependent zinc metalloprotease FtsH from Syntrophus aciditrophicus (strain SB).